The sequence spans 185 residues: NEDD8-conjugating enzyme UBE2F (185 aa).

Residues 1–29 are disordered; sequence MLTLASKLKRDDGVKGSRTSSTTSDSTRR. The interaction with uba3 stretch occupies residues 1 to 29; that stretch reads MLTLASKLKRDDGVKGSRTSSTTSDSTRR. Positions 32-185 constitute a UBC core domain; the sequence is VRDRLLVKEV…VEDYIKRYAR (154 aa). The Glycyl thioester intermediate role is filled by Cys-116.

Belongs to the ubiquitin-conjugating enzyme family. UBE2F subfamily.

The enzyme catalyses [E1 NEDD8-activating enzyme]-S-[NEDD8 protein]-yl-L-cysteine + [E2 NEDD8-conjugating enzyme]-L-cysteine = [E1 NEDD8-activating enzyme]-L-cysteine + [E2 NEDD8-conjugating enzyme]-S-[NEDD8-protein]-yl-L-cysteine.. It participates in protein modification; protein neddylation. Accepts the ubiquitin-like protein NEDD8 from the UBA3-NAE1 E1 complex and catalyzes its covalent attachment to other proteins. Together with the E3 ubiquitin ligase rnf7/rbx2, specifically neddylates cullin-5 (cul5). Does not neddylate cul1, cul2, cul3, cul4a or cul4b. This Xenopus tropicalis (Western clawed frog) protein is NEDD8-conjugating enzyme UBE2F (ube2f).